The sequence spans 424 residues: Calreticulin-2 (424 aa).

An N-terminal signal peptide occupies residues 1–22 (MAKMIPSLVSLILIGLVAIASA). N-linked (GlcNAc...) asparagine glycosylation occurs at Asn59. A disulfide bridge connects residues Cys108 and Cys140. Residues Tyr112, Lys114, Tyr131, and Asp138 each coordinate an alpha-D-glucoside. Repeat copies occupy residues 194-205 (KQTGSLYSDWDL), 213-224 (DPSAKKPEDWDE), 230-241 (DPEDKKPDGYDD), 248-259 (DTDSKKPEDWDD), 263-273 (GEWTAPTIPNP), 277-287 (GEWKPKQIKNP), and 291-301 (GKWEAPLIDNP). The interval 194 to 259 (KQTGSLYSDW…DSKKPEDWDD (66 aa)) is 4 X approximate repeats. Residues 210 to 220 (KIKDPSAKKPE) are compositionally biased toward basic and acidic residues. The interval 210 to 279 (KIKDPSAKKP…IPNPEYMGEW (70 aa)) is disordered. The segment covering 221–230 (DWDEQEYISD) has biased composition (acidic residues). Basic and acidic residues predominate over residues 231–255 (PEDKKPDGYDDIPKEIPDTDSKKPE). Positions 263–301 (GEWTAPTIPNPEYMGEWKPKQIKNPNYKGKWEAPLIDNP) are 3 X approximate repeats. Glu321 is a binding site for an alpha-D-glucoside. A compositionally biased stretch (basic and acidic residues) spans 362 to 378 (FDEAEKKNEEEESKDAP). The segment at 362–424 (FDEAEKKNEE…EKDATAHDEL (63 aa)) is disordered. Residues 379–397 (AESDAEDEPEDDEGGDDSD) are compositionally biased toward acidic residues. 2 positions are modified to phosphoserine: Ser381 and Ser396. The segment covering 398–424 (SESKAEETKSVDSEETSEKDATAHDEL) has biased composition (basic and acidic residues). The Prevents secretion from ER signature appears at 421-424 (HDEL).

Belongs to the calreticulin family.

It is found in the endoplasmic reticulum lumen. In terms of biological role, molecular calcium-binding chaperone promoting folding, oligomeric assembly and quality control in the ER via the calreticulin/calnexin cycle. This lectin may interact transiently with almost all of the monoglucosylated glycoproteins that are synthesized in the ER. The polypeptide is Calreticulin-2 (CRT2) (Arabidopsis thaliana (Mouse-ear cress)).